Here is a 463-residue protein sequence, read N- to C-terminus: V-type proton ATPase subunit S1 (463 aa).

A signal peptide spans 1–32; sequence MMAATVVSRIRTGTRWAPVLWLLLSLVAVAAA. Positions 33-225 are excised as a propeptide; sequence VAAEQQVPLV…TAVRPSRVAR (193 aa). The Lumenal portion of the chain corresponds to 33-412; sequence VAAEQQVPLV…EQFSYASDCA (380 aa). 8 N-linked (GlcNAc...) asparagine glycosylation sites follow: Asn-164, Asn-255, Asn-267, Asn-290, Asn-297, Asn-344, Asn-351, and Asn-399. Residues 413–433 form a helical membrane-spanning segment; that stretch reads GFFSPGIWMGLLTTLFMLFIF. Residues 434–463 are Cytoplasmic-facing; that stretch reads TYGLHMILSLKTMDRFDDRKGPTITLTQIV.

The protein belongs to the vacuolar ATPase subunit S1 family. Accessory component of the multisubunit proton-transporting vacuolar (V)-ATPase protein pump. Interacts (via N-terminus) with ATP6AP2 (via N-terminus). Interacts with RNASEK. Interacts with TMEM106B (via C-terminus). Post-translationally, N-glycosylated. As to expression, expressed in brain (at protein level).

It is found in the endoplasmic reticulum membrane. Its subcellular location is the endoplasmic reticulum-Golgi intermediate compartment membrane. The protein localises to the cytoplasmic vesicle. It localises to the secretory vesicle. The protein resides in the synaptic vesicle membrane. It is found in the clathrin-coated vesicle membrane. Functionally, accessory subunit of the proton-transporting vacuolar (V)-ATPase protein pump, which is required for luminal acidification of secretory vesicles. Guides the V-type ATPase into specialized subcellular compartments, such as neuroendocrine regulated secretory vesicles or the ruffled border of the osteoclast, thereby regulating its activity. Involved in membrane trafficking and Ca(2+)-dependent membrane fusion. May play a role in the assembly of the V-type ATPase complex. In aerobic conditions, involved in intracellular iron homeostasis, thus triggering the activity of Fe(2+) prolyl hydroxylase (PHD) enzymes, and leading to HIF1A hydroxylation and subsequent proteasomal degradation. In islets of Langerhans cells, may regulate the acidification of dense-core secretory granules. In Rattus norvegicus (Rat), this protein is V-type proton ATPase subunit S1 (Atp6ap1).